A 734-amino-acid chain; its full sequence is Subtilisin-like protease (734 aa).

A signal peptide spans 1–20 (MTCICIFSIAFLLSFHLTTA). Positions 28 to 109 (TYIVHVDKPD…AKLEKVLTLH (82 aa)) constitute an Inhibitor I9 domain. The region spanning 114–591 (PNFLGLYQNM…AGHVNPSKAS (478 aa)) is the Peptidase S8 domain. Asp141 serves as the catalytic Charge relay system. N-linked (GlcNAc...) asparagine glycosylation occurs at Asn172. The active-site Charge relay system is the His199. 2 N-linked (GlcNAc...) asparagine glycosylation sites follow: Asn222 and Asn306. One can recognise a PA domain in the interval 357 to 442 (PLVYPGTSDE…THVGYAAGEM (86 aa)). N-linked (GlcNAc...) asparagine glycans are attached at residues Asn448 and Asn509. The Charge relay system role is filled by Ser524. Asn652 carries an N-linked (GlcNAc...) asparagine glycan.

The protein belongs to the peptidase S8 family.

The protein resides in the secreted. Its subcellular location is the extracellular space. It localises to the apoplast. Its function is as follows. Required for arbuscular mycorrhiza (AM) development during AM symbiosis with AM fungi (e.g. Glomeromycota intraradices). The polypeptide is Subtilisin-like protease (Petunia hybrida (Petunia)).